The primary structure comprises 197 residues: uncharacterized protein (197 aa).

The protein belongs to the NAD(P)H dehydrogenase (quinone) family.

This is an uncharacterized protein from Bacillus subtilis (strain 168).